Here is a 365-residue protein sequence, read N- to C-terminus: Aminomethyltransferase (365 aa).

This sequence belongs to the GcvT family. In terms of assembly, the glycine cleavage system is composed of four proteins: P, T, L and H.

It carries out the reaction N(6)-[(R)-S(8)-aminomethyldihydrolipoyl]-L-lysyl-[protein] + (6S)-5,6,7,8-tetrahydrofolate = N(6)-[(R)-dihydrolipoyl]-L-lysyl-[protein] + (6R)-5,10-methylene-5,6,7,8-tetrahydrofolate + NH4(+). Functionally, the glycine cleavage system catalyzes the degradation of glycine. The protein is Aminomethyltransferase of Desulfitobacterium hafniense (strain DSM 10664 / DCB-2).